Consider the following 184-residue polypeptide: Ribosome-recycling factor (184 aa).

The protein belongs to the RRF family.

It localises to the cytoplasm. Responsible for the release of ribosomes from messenger RNA at the termination of protein biosynthesis. May increase the efficiency of translation by recycling ribosomes from one round of translation to another. This chain is Ribosome-recycling factor, found in Stenotrophomonas maltophilia (strain K279a).